The following is a 342-amino-acid chain: MFSSLYPLARASLFKMDAEDAHHLTLRMLGAAGRTGLACALSPRVPDAPRTVMGLSFRNPVGLAAGLDKDGAAIDGFAALGFGFIEVGTVTPRAQPGNPRPRLFRLPEADAIINRMGFNNSGVDQFVKNVQAARYRGVLGLNIGKNADTPIERAADDYLYCLERVYPFASYVTINISSPNTKNLRQLQGAGELDALLAALKDKQRRLADLHGKLVPLALKIAPDLDDEQVKEIAATLLRHDIEGVIATNTTLSREAVKGLPHADEAGGLSGRPVFDASNAVIRKLRAELGDAVPIIGVGGIFSGEDARAKLAAGAALVQLYTGFIYRGPALVAECVKAIARG.

FMN contacts are provided by residues 65-69 (AGLDK) and Thr-89. Lys-69 serves as a coordination point for substrate. 114–118 (NRMGF) provides a ligand contact to substrate. FMN contacts are provided by Asn-142 and Asn-175. Substrate is bound at residue Asn-175. Ser-178 serves as the catalytic Nucleophile. Asn-180 contacts substrate. Lys-220 and Thr-248 together coordinate FMN. 249–250 (NT) lines the substrate pocket. Residues Gly-271, Gly-300, and 321-322 (YT) each bind FMN.

The protein belongs to the dihydroorotate dehydrogenase family. Type 2 subfamily. As to quaternary structure, monomer. The cofactor is FMN.

It localises to the cell membrane. It catalyses the reaction (S)-dihydroorotate + a quinone = orotate + a quinol. It functions in the pathway pyrimidine metabolism; UMP biosynthesis via de novo pathway; orotate from (S)-dihydroorotate (quinone route): step 1/1. Functionally, catalyzes the conversion of dihydroorotate to orotate with quinone as electron acceptor. This Burkholderia pseudomallei (strain 668) protein is Dihydroorotate dehydrogenase (quinone).